Consider the following 338-residue polypeptide: Probable family 20 transposase (338 aa).

Belongs to the transposase 20 family.

In terms of biological role, required for the transposition of an insertion element. In Pseudomonas aeruginosa (strain ATCC 15692 / DSM 22644 / CIP 104116 / JCM 14847 / LMG 12228 / 1C / PRS 101 / PAO1), this protein is Probable family 20 transposase.